A 191-amino-acid chain; its full sequence is Holliday junction branch migration complex subunit RuvA (191 aa).

The segment at 1 to 64 (MIGSITGNVE…DNITQLYGFL (64 aa)) is domain I. The segment at 65–142 (NRQEQDYFKM…KMPIEETFSI (78 aa)) is domain II. The tract at residues 143–146 (IEND) is flexible linker. The interval 146–191 (DDSLAALISLGYEKLKAFNVIQEIKSKTPDASTQEVIRKALQKLSQ) is domain III.

This sequence belongs to the RuvA family. Homotetramer. Forms an RuvA(8)-RuvB(12)-Holliday junction (HJ) complex. HJ DNA is sandwiched between 2 RuvA tetramers; dsDNA enters through RuvA and exits via RuvB. An RuvB hexamer assembles on each DNA strand where it exits the tetramer. Each RuvB hexamer is contacted by two RuvA subunits (via domain III) on 2 adjacent RuvB subunits; this complex drives branch migration. In the full resolvosome a probable DNA-RuvA(4)-RuvB(12)-RuvC(2) complex forms which resolves the HJ.

The protein resides in the cytoplasm. In terms of biological role, the RuvA-RuvB-RuvC complex processes Holliday junction (HJ) DNA during genetic recombination and DNA repair, while the RuvA-RuvB complex plays an important role in the rescue of blocked DNA replication forks via replication fork reversal (RFR). RuvA specifically binds to HJ cruciform DNA, conferring on it an open structure. The RuvB hexamer acts as an ATP-dependent pump, pulling dsDNA into and through the RuvAB complex. HJ branch migration allows RuvC to scan DNA until it finds its consensus sequence, where it cleaves and resolves the cruciform DNA. The protein is Holliday junction branch migration complex subunit RuvA of Ehrlichia ruminantium (strain Gardel).